Consider the following 319-residue polypeptide: Methionyl-tRNA formyltransferase (319 aa).

113-116 contributes to the (6S)-5,6,7,8-tetrahydrofolate binding site; the sequence is SLLP.

The protein belongs to the Fmt family.

It carries out the reaction L-methionyl-tRNA(fMet) + (6R)-10-formyltetrahydrofolate = N-formyl-L-methionyl-tRNA(fMet) + (6S)-5,6,7,8-tetrahydrofolate + H(+). Attaches a formyl group to the free amino group of methionyl-tRNA(fMet). The formyl group appears to play a dual role in the initiator identity of N-formylmethionyl-tRNA by promoting its recognition by IF2 and preventing the misappropriation of this tRNA by the elongation apparatus. The sequence is that of Methionyl-tRNA formyltransferase from Hamiltonella defensa subsp. Acyrthosiphon pisum (strain 5AT).